The sequence spans 728 residues: Beta-galactosidase 12 (728 aa).

A signal peptide spans 1–27 (MGLNFREKAWILLGILCCSSLICSVKA). Glu185 acts as the Proton donor in catalysis. The active-site Nucleophile is the Glu254. N-linked (GlcNAc...) asparagine glycosylation is found at Asn255, Asn380, and Asn450.

Belongs to the glycosyl hydrolase 35 family. As to expression, ubiquitous, with higher expression levels in roots and siliques.

It is found in the secreted. The protein resides in the extracellular space. It localises to the apoplast. The catalysed reaction is Hydrolysis of terminal non-reducing beta-D-galactose residues in beta-D-galactosides.. The polypeptide is Beta-galactosidase 12 (BGAL12) (Arabidopsis thaliana (Mouse-ear cress)).